Here is a 370-residue protein sequence, read N- to C-terminus: Putative L-lysine 2,3-aminomutase aq_454 (370 aa).

The region spanning 107–322 (HRYPDRVLLN…RGRLSGFGIP (216 aa)) is the Radical SAM core domain. Positions 121, 125, and 128 each coordinate [4Fe-4S] cluster. Lysine 334 carries the N6-(pyridoxal phosphate)lysine modification.

Belongs to the radical SAM superfamily. KamA family. [4Fe-4S] cluster is required as a cofactor. Pyridoxal 5'-phosphate serves as cofactor.

In Aquifex aeolicus (strain VF5), this protein is Putative L-lysine 2,3-aminomutase aq_454.